Consider the following 1162-residue polypeptide: Cartilage intermediate layer protein 2 (1162 aa).

The first 20 residues, 1 to 20 (MASPLPLLYLCLAALHLAGA), serve as a signal peptide directing secretion. Positions 23 to 51 (ATPTEEHTSTARGLQGRPPDTGQPSPALE) are disordered. The TSP type-1 domain occupies 146 to 197 (EAAWGAWGAWGLCSKSCGLGRRLRRRSCQSSSGDTCPGSPQEAQKCVRSRCP). 4 disulfides stabilise this stretch: cysteine 158–cysteine 191, cysteine 162–cysteine 196, cysteine 173–cysteine 181, and cysteine 314–cysteine 360. The region spanning 293-377 (PYLVKHPESR…TVRSRAALLT (85 aa)) is the Ig-like C2-type domain. A glycan (N-linked (GlcNAc...) asparagine) is linked at asparagine 330.

Post-translationally, may be cleaved into 2 chains possibly by a furin-like protease upon or preceding secretion. N-glycosylated. As to expression, expressed in articulated and meniscal cartilage (at protein level). Also detected in heart, skeletal muscle and brain. Not detected in growth plate cartilage.

It localises to the secreted. Its subcellular location is the extracellular space. The protein localises to the extracellular matrix. May play a role in cartilage scaffolding. This chain is Cartilage intermediate layer protein 2, found in Mus musculus (Mouse).